A 281-amino-acid chain; its full sequence is CCAAT/enhancer-binding protein epsilon (281 aa).

Residues methionine 1–leucine 30 form a disordered region. Residue lysine 121 forms a Glycyl lysine isopeptide (Lys-Gly) (interchain with G-Cter in SUMO2) linkage. At serine 181 the chain carries Phosphoserine. The 64-residue stretch at serine 204–isoleucine 267 folds into the bZIP domain. The interval arginine 208–arginine 245 is basic motif. Residues leucine 246–isoleucine 267 form a leucine-zipper region.

Belongs to the bZIP family. C/EBP subfamily. In terms of assembly, binds DNA as a homodimer and as a heterodimer. Can form stable heterodimers with CEBPA, CEBPB and CEBPD. Interacts with GATA1 and SPI1. Interacts with SMARCD2.

The protein resides in the nucleus. Functionally, transcriptional activator. C/EBP are DNA-binding proteins that recognize two different motifs: the CCAAT homology common to many promoters and the enhanced core homology common to many enhancers. Required for the promyelocyte-myelocyte transition in myeloid differentiation. In Rattus norvegicus (Rat), this protein is CCAAT/enhancer-binding protein epsilon (Cebpe).